The chain runs to 424 residues: Arogenate dehydratase 4, chloroplastic (424 aa).

A chloroplast-targeting transit peptide spans 1-34; sequence MQAATSCDLKFRSTDPTSRNKCFSHAIPKRVAVT. The Prephenate dehydratase domain maps to 126 to 303; sequence RVAYQGVPGA…NVTRFLMLAR (178 aa). The ACT domain maps to 319–410; the sequence is VFAAQEHKGT…SFLRVLGSYP (92 aa).

Expressed in roots, leaves, stems, flowers and siliques. More abundant in stems and roots.

The protein resides in the plastid. Its subcellular location is the chloroplast stroma. It catalyses the reaction L-arogenate + H(+) = L-phenylalanine + CO2 + H2O. It participates in amino-acid biosynthesis; L-phenylalanine biosynthesis; L-phenylalanine from L-arogenate: step 1/1. Functionally, converts the prephenate produced from the shikimate-chorismate pathway into phenylalanine. This is Arogenate dehydratase 4, chloroplastic from Arabidopsis thaliana (Mouse-ear cress).